The primary structure comprises 420 residues: Arginine biosynthesis bifunctional protein ArgJ (420 aa).

Positions 167, 193, 204, 284, 415, and 420 each coordinate substrate. The active-site Nucleophile is the T204.

It belongs to the ArgJ family. As to quaternary structure, heterotetramer of two alpha and two beta chains.

It localises to the cytoplasm. It carries out the reaction N(2)-acetyl-L-ornithine + L-glutamate = N-acetyl-L-glutamate + L-ornithine. The enzyme catalyses L-glutamate + acetyl-CoA = N-acetyl-L-glutamate + CoA + H(+). It participates in amino-acid biosynthesis; L-arginine biosynthesis; L-ornithine and N-acetyl-L-glutamate from L-glutamate and N(2)-acetyl-L-ornithine (cyclic): step 1/1. The protein operates within amino-acid biosynthesis; L-arginine biosynthesis; N(2)-acetyl-L-ornithine from L-glutamate: step 1/4. Catalyzes two activities which are involved in the cyclic version of arginine biosynthesis: the synthesis of N-acetylglutamate from glutamate and acetyl-CoA as the acetyl donor, and of ornithine by transacetylation between N(2)-acetylornithine and glutamate. The sequence is that of Arginine biosynthesis bifunctional protein ArgJ from Prochlorococcus marinus (strain NATL2A).